Reading from the N-terminus, the 334-residue chain is Glutaminase (334 aa).

Residues S76, N126, E170, N177, Y201, Y253, and V271 each coordinate substrate.

This sequence belongs to the glutaminase family. Homotetramer.

It carries out the reaction L-glutamine + H2O = L-glutamate + NH4(+). The polypeptide is Glutaminase (Nostoc sp. (strain PCC 7120 / SAG 25.82 / UTEX 2576)).